The primary structure comprises 345 residues: Fibronectin type 3 and ankyrin repeat domains protein 1 (345 aa).

The 101-residue stretch at 8–108 (PPSKPHPPVV…LVSVSTTREP (101 aa)) folds into the Fibronectin type-III domain. 6 ANK repeats span residues 109–139 (ISSE…KVDV), 143–172 (FGFT…DVNL), 176–205 (SGKD…SWQA), 209–238 (GGCT…EVDV), 243–273 (SGWT…NVNV), and 277–306 (NGKT…DASV).

In terms of assembly, interacts with COPS5; regulates the phosphorylation of JUN and the transcriptional activity of AP-1. Interacts with RYBP; may prevent the ubiquitin-mediated proteasomal degradation of FANK1. Polyubiquitinated. Polyubiquitination leads to proteasomal degradation. Mostly restricted to testis.

The protein resides in the nucleus. It localises to the cytoplasm. Its subcellular location is the cytosol. It is found in the cytoskeleton. The protein localises to the cilium basal body. The protein resides in the cell projection. It localises to the cilium. Functionally, through the activation of JUN and AP-1-mediated transcription, may regulate apoptosis. The chain is Fibronectin type 3 and ankyrin repeat domains protein 1 from Homo sapiens (Human).